The primary structure comprises 182 residues: tRNA-splicing endonuclease (182 aa).

Catalysis depends on residues Y119, H127, and K158.

Belongs to the tRNA-intron endonuclease family. Archaeal short subfamily. As to quaternary structure, homotetramer; although the tetramer contains four active sites, only two participate in the cleavage. Therefore, it should be considered as a dimer of dimers.

The catalysed reaction is pretRNA = a 3'-half-tRNA molecule with a 5'-OH end + a 5'-half-tRNA molecule with a 2',3'-cyclic phosphate end + an intron with a 2',3'-cyclic phosphate and a 5'-hydroxyl terminus.. Functionally, endonuclease that removes tRNA introns. Cleaves pre-tRNA at the 5'- and 3'-splice sites to release the intron. The products are an intron and two tRNA half-molecules bearing 2',3' cyclic phosphate and 5'-OH termini. Recognizes a pseudosymmetric substrate in which 2 bulged loops of 3 bases are separated by a stem of 4 bp. This Saccharolobus islandicus (strain M.16.27) (Sulfolobus islandicus) protein is tRNA-splicing endonuclease.